Reading from the N-terminus, the 92-residue chain is Small ribosomal subunit protein uS19c (92 aa).

Belongs to the universal ribosomal protein uS19 family.

The protein localises to the plastid. It localises to the chloroplast. Its function is as follows. Protein S19 forms a complex with S13 that binds strongly to the 16S ribosomal RNA. This chain is Small ribosomal subunit protein uS19c, found in Phaeodactylum tricornutum (strain CCAP 1055/1).